A 1449-amino-acid polypeptide reads, in one-letter code: MAFNQMRSSGSTTDLNRLNSSSISGGGNINISNGGYGNQQLNAILSPIKSSSLSSMSNSSSYSNLNTLSSSKSFNSLTLIENQNDTTTTTSTNNGAISEQYQQLLSMIPKYQTKQYESDVKILFERNTPEQMKQMEFKKRSEIEDMKSQLRNLIGNKYRDLVEGSDAIVKMKKSTELISDNLSLMQSELKQFSEKRNHFRKGVSQDNLKLNKEKEIQKKISIFSKYCKFLIDIPEVIWRSLDSNDYFEVCVFFLKSKYLYSKITNENNLEIKRLLSKLTIIEKQWISMKQFPIKTIGYSKLFLNESTSRIIGTPIEKYIGSLSTLILFEKKSIKETFNEFLLSRRSVLFNSILSKDTNRPIQQTIEKMFQFLKMSIYYIMVLFYPRKYQTNNNNNNDQPEEEEQDDEKLISNDYQSKISKFKSNLQQYTSSLSSMSSTTTTTNSPTFESKMINKPVSEKELNQLPTLNFTSSILESTFNWRSPYLKECLKFYKDVSNGELSINSSGSQQGDDYQDINTNNNNSNNNNSGIDSQDIEYSLIEFDNFNSNFIFKRTSEWIEEIIEDFKLNLVQKFLIDIKSAKELSSLRSEIFDFILDFKNIVPFIQPPQTNSLSSSNSSINSIASPSVSLTSSTSSPIIATTKATVLTTPTPTPTPTPTTPISWNRMFSIICGKDMKYFLNIFEDIFLVKSESIIMDSFSRINLSKIQSDIFSQIKSEDKNFSEFLWFYNQDDPIQSIKNKTNGITPSNELFLTKINQLYNNIKSDFIYLLNDNNINNININNNNNNNNNNNNNNNNNRSMIITSQPKNLIKINEILIKEYMKKSFYKSLNEFTTSTQDRIDQLILLNKNKTTSGTTTSTNLKKDEILFISKLSKIFYKHIVNNPNLYFLNSLNIFDTTNISNCSTSFSKSNSINILDTISSPPQPPPSPTHSSPSIQRHTNNNNNNNNNNNNTSPIINNNNNNSEILKESLPIIDKLKQQFYYGCIVWVNEFVGDYSQILKQDLFNHDWNDSDRIKTWEKHIIQIESNGHNHNNDANDGGGDDDATVNGVNEHSTIIYIPYQTSPFITSYLMSISLEISKFSLNTIDKNILRFIIESITLNLFNIVNDLLSTSSTSTTASTSNLTSNNTTTTIKFNKEGYIQLLIDLKYIGFILFGRELNSSSSKKPTSQPTSNVIIKDSIFKKAKSHYQSIISTKNNVDENIELQKQQQQQQQQQQQQQQQQQQQQQQQQQQQQQQQEQLSNNIVYTFNQIIELVEKNLDPIDLAFYNSYIVKFIDQTYSKTLTLFGNFVYLHKSIVKPEKKQSINGGQQSPPLATTSSNGISGGKGIQQQQQQQSDLPNPMQLLKTNTKFQLFSIDTIQTITDAIATAPTTIPSSTSNSIQSSANNSAIASPISTIDYRNQQQQQQNNTNQQSLPSILSPTSASSTINTFSFMGKKISDLMYNTTKK.

4 disordered regions span residues 503–529, 916–960, 1303–1338, and 1401–1422; these read NSSGSQQGDDYQDINTNNNNSNNNNSG, LDTI…INNN, KQSINGGQQSPPLATTSSNGISGGKGIQQQQQQQSD, and RNQQQQQQNNTNQQSLPSILSP. 2 stretches are compositionally biased toward low complexity: residues 517 to 528 and 930 to 960; these read NTNNNNSNNNNS and THSSPSIQRHTNNNNNNNNNNNNTSPIINNN. Residues 1305-1322 are compositionally biased toward polar residues; sequence SINGGQQSPPLATTSSNG. Residues 1401–1414 show a composition bias toward low complexity; sequence RNQQQQQQNNTNQQ.

Belongs to the COG1 family. Component of the conserved oligomeric Golgi complex which is composed of eight different subunits and is required for normal Golgi morphology and localization.

Its subcellular location is the golgi apparatus membrane. Required for normal Golgi function. The polypeptide is Conserved oligomeric Golgi complex subunit 1 (cog1) (Dictyostelium discoideum (Social amoeba)).